The sequence spans 211 residues: Probable nicotinate-nucleotide adenylyltransferase (211 aa).

This sequence belongs to the NadD family.

It catalyses the reaction nicotinate beta-D-ribonucleotide + ATP + H(+) = deamido-NAD(+) + diphosphate. It participates in cofactor biosynthesis; NAD(+) biosynthesis; deamido-NAD(+) from nicotinate D-ribonucleotide: step 1/1. Catalyzes the reversible adenylation of nicotinate mononucleotide (NaMN) to nicotinic acid adenine dinucleotide (NaAD). This chain is Probable nicotinate-nucleotide adenylyltransferase, found in Legionella pneumophila (strain Paris).